The following is a 386-amino-acid chain: Cystathionine gamma-synthase (386 aa).

Lys-198 carries the N6-(pyridoxal phosphate)lysine modification.

This sequence belongs to the trans-sulfuration enzymes family. Homotetramer. The cofactor is pyridoxal 5'-phosphate.

The protein resides in the cytoplasm. The enzyme catalyses O-succinyl-L-homoserine + L-cysteine = L,L-cystathionine + succinate + H(+). The protein operates within amino-acid biosynthesis; L-methionine biosynthesis via de novo pathway; L-cystathionine from O-succinyl-L-homoserine: step 1/1. In terms of biological role, catalyzes the formation of L-cystathionine from O-succinyl-L-homoserine (OSHS) and L-cysteine, via a gamma-replacement reaction. In the absence of thiol, catalyzes gamma-elimination to form 2-oxobutanoate, succinate and ammonia. This is Cystathionine gamma-synthase (metB) from Escherichia coli (strain K12).